A 289-amino-acid chain; its full sequence is uncharacterized protein (289 aa).

The signal sequence occupies residues 1–23 (MIKNYKLLLFTTFTLFFITFVSG). Residues asparagine 74, asparagine 101, asparagine 132, and asparagine 285 are each glycosylated (N-linked (GlcNAc...) asparagine).

The protein localises to the secreted. This is an uncharacterized protein from Dictyostelium discoideum (Social amoeba).